The primary structure comprises 190 residues: Ribosome hibernation promotion factor (190 aa).

The protein belongs to the HPF/YfiA ribosome-associated protein family. Long HPF subfamily. As to quaternary structure, interacts with 100S ribosomes.

It localises to the cytoplasm. In terms of biological role, required for dimerization of active 70S ribosomes into 100S ribosomes in stationary phase; 100S ribosomes are translationally inactive and sometimes present during exponential growth. This Rhizobium meliloti (strain 1021) (Ensifer meliloti) protein is Ribosome hibernation promotion factor.